The sequence spans 483 residues: Succinate semialdehyde dehydrogenase (483 aa).

NAD(+) is bound by residues 156 to 157 (WN), 180 to 183 (KPAP), and 233 to 234 (GS). E255 functions as the Proton acceptor in the catalytic mechanism. L256 serves as a coordination point for NAD(+). C289 functions as the Nucleophile in the catalytic mechanism. NAD(+) is bound at residue E386.

The protein belongs to the aldehyde dehydrogenase family. As to quaternary structure, homotetramer.

It carries out the reaction succinate semialdehyde + NAD(+) + H2O = succinate + NADH + 2 H(+). In terms of biological role, involved in the degradation of the pyridine ring of trigonelline (TG; N-methylnicotinate) into succinate and methylamine as carbon and nitrogen sources, respectively. Catalyzes the NAD(+)-dependent oxidation of succinate semialdehyde to succinate. The protein is Succinate semialdehyde dehydrogenase of Acinetobacter baylyi (strain ATCC 33305 / BD413 / ADP1).